The primary structure comprises 578 residues: Transcriptional regulator SKO1 (578 aa).

Residues 39–50 (NDAISDVNSVAT) are compositionally biased toward polar residues. 4 disordered regions span residues 39 to 169 (NDAI…TQQP), 176 to 195 (MSGMRKTGLTPNESNIRSGL), 287 to 311 (LQQDQSSQALVGGLPPSQPQPQPQP), and 342 to 489 (ESKP…RKNF). The segment covering 51-62 (SGSSINNGSSSN) has biased composition (low complexity). 2 stretches are compositionally biased toward polar residues: residues 70 to 80 (NISSVNQQQGV) and 107 to 132 (GGTTSRQYSNSTNSGSLQSNTDTLGS). Low complexity predominate over residues 154-169 (PQQQQQPQQQQQTQQP). The span at 184 to 193 (LTPNESNIRS) shows a compositional bias: polar residues. 2 stretches are compositionally biased toward low complexity: residues 287–296 (LQQDQSSQAL) and 356–370 (DLNPTADTTTNTTTA). Positions 384–402 (KKAKVAKGKKKEPKSKSKG) are enriched in basic residues. The span at 415 to 443 (KPEDENVPGKENGNEENHKVEAESKEEHL) shows a compositional bias: basic and acidic residues. The span at 445-471 (NGNETTTTKTNNTGNSSNGTTTTTTTK) shows a compositional bias: low complexity. Residues 483-546 (DDKRKNFLER…LLLKEKHNIQ (64 aa)) form the bZIP domain. The basic motif stretch occupies residues 485 to 505 (KRKNFLERNRVAASKCRQRKK). A leucine-zipper region spans residues 508 to 515 (IQKMEEEL).

This sequence belongs to the bZIP family. In terms of processing, undergoes HOG1-dependent phosphorylation after osmotic stress.

Its subcellular location is the nucleus. Functionally, transcription repressor involved in cell wall damage response. Regulates 79 caspofungin-responsive genes, including several cell wall biogenesis genes such as CRH11, MNN2, and SKN1. Also controls the expression of pathogenesis and hyphal related genes and represses the yeast-to-hypha transition. Mediates the response to oxidative stress. This chain is Transcriptional regulator SKO1 (SKO1), found in Candida albicans (strain SC5314 / ATCC MYA-2876) (Yeast).